We begin with the raw amino-acid sequence, 235 residues long: Repeat element protein (235 aa).

The repeat element stretch occupies residues 57-235 (IFQELLERLS…ARRKKCRFSQ (179 aa)).

The polypeptide is Repeat element protein (Campoletis sonorensis (CsIV)).